The following is a 306-amino-acid chain: tRNA dimethylallyltransferase (306 aa).

ATP is bound at residue 11 to 18; the sequence is GPTAVGKS. A substrate-binding site is contributed by 13 to 18; that stretch reads TAVGKS. Residues 35-38 are interaction with substrate tRNA; that stretch reads DSIQ.

It belongs to the IPP transferase family. Monomer. The cofactor is Mg(2+).

It catalyses the reaction adenosine(37) in tRNA + dimethylallyl diphosphate = N(6)-dimethylallyladenosine(37) in tRNA + diphosphate. Its function is as follows. Catalyzes the transfer of a dimethylallyl group onto the adenine at position 37 in tRNAs that read codons beginning with uridine, leading to the formation of N6-(dimethylallyl)adenosine (i(6)A). In Borreliella burgdorferi (strain ZS7) (Borrelia burgdorferi), this protein is tRNA dimethylallyltransferase.